Consider the following 188-residue polypeptide: Elongation factor P (188 aa).

The residue at position 34 (lysine 34) is an N6-(3,6-diaminohexanoyl)-5-hydroxylysine.

It belongs to the elongation factor P family. In terms of processing, is beta-lysylated on the epsilon-amino group of Lys-34 by the combined action of EpmA and EpmB, and then hydroxylated on the C5 position of the same residue by EpmC. Lysylation is critical for the stimulatory effect of EF-P on peptide-bond formation. The lysylation moiety would extend toward the peptidyltransferase center and stabilize the terminal 3-CCA end of the tRNA. The hydroxylation of the C5 position on Lys-34 would allow additional potential stabilizing hydrogen-bond interactions with the P-tRNA.

It is found in the cytoplasm. It functions in the pathway protein biosynthesis; polypeptide chain elongation. Functionally, involved in peptide bond synthesis. Alleviates ribosome stalling that occurs when 3 or more consecutive Pro residues or the sequence PPG is present in a protein, possibly by augmenting the peptidyl transferase activity of the ribosome. Modification of Lys-34 is required for alleviation. This chain is Elongation factor P, found in Salmonella arizonae (strain ATCC BAA-731 / CDC346-86 / RSK2980).